The primary structure comprises 359 residues: Src kinase-associated phosphoprotein 2 (359 aa).

3 positions are modified to phosphoserine: Ser-5, Ser-6, and Ser-9. A homodimerization region spans residues 14 to 64; the sequence is PEEIRNLLADVETFVADILKGENLSKKAKEKRESLIKKIKDVKSIYLQEFQ. The interval 66–88 is disordered; it reads KGDAEDGEEYDDPFAGPPDTISL. Tyr-75 carries the phosphotyrosine modification. A phosphoserine mark is found at Ser-87 and Ser-90. In terms of domain architecture, PH spans 116–219; sequence FVLKAGYLEK…WVQQLKFVLQ (104 aa). 2 positions are modified to phosphotyrosine: Tyr-151 and Tyr-197. Ser-223 is modified (phosphoserine). Residue Tyr-261 is modified to Phosphotyrosine. Residues 264-293 are disordered; that stretch reads LPEEEEDSAPVKVEEQRKMSQDSVHHTSGD. Positions 275–293 are enriched in basic and acidic residues; it reads KVEEQRKMSQDSVHHTSGD. 2 positions are modified to phosphoserine: Ser-283 and Ser-286. In terms of domain architecture, SH3 spans 297-358; the sequence is DYANFYQGLW…PKAYIMEMYD (62 aa).

This sequence belongs to the SKAP family. Homodimer. Interacts with PTPNS1. Part of a complex consisting of SKAP2, FYB1 and PTPNS1. Part of a complex consisting of SKAP2, FYB1 and LILRB3. May interact with actin. Interacts with FYB1, which is required for SKAP2 protein stability. Interacts with LAT, GRB2, PTK2B and PRAM1. May interact with FYN, HCK and LYN. Interacts with FASLG. Phosphorylated in resting platelets. Phosphorylated by FYN on Tyr-261 upon T-cell activation. Dephosphorylated on Tyr-75 by PTPN22. In terms of tissue distribution, ubiquitously expressed. Present in platelets (at protein level).

It is found in the cytoplasm. Its function is as follows. May be involved in B-cell and macrophage adhesion processes. In B-cells, may act by coupling the B-cell receptor (BCR) to integrin activation. May play a role in src signaling pathway. In Homo sapiens (Human), this protein is Src kinase-associated phosphoprotein 2 (SKAP2).